The following is a 152-amino-acid chain: SKP1-like protein 10 (152 aa).

The tract at residues 94 to 152 (IMAANYLNIKSLLDLACQTVADMIKDNTVEHTRKFFNIENDYTHEEEEAVRRENQWGFE) is interaction with the F-box domain of F-box proteins.

Belongs to the SKP1 family. As to quaternary structure, part of a SCF (SKP1-cullin-F-box) protein ligase complex. Interacts with CPR1/CPR30. As to expression, expressed in young seedlings, roots, leaves, floral stems, inflorescences, and siliques.

It localises to the nucleus. Its pathway is protein modification; protein ubiquitination. Involved in ubiquitination and subsequent proteasomal degradation of target proteins. Together with CUL1, RBX1 and a F-box protein, it forms a SCF E3 ubiquitin ligase complex. The functional specificity of this complex depends on the type of F-box protein. In the SCF complex, it serves as an adapter that links the F-box protein to CUL1. The chain is SKP1-like protein 10 (ASK10) from Arabidopsis thaliana (Mouse-ear cress).